Reading from the N-terminus, the 802-residue chain is Osmosensitive cation channel TMEM63C (802 aa).

At 1 to 35 (MSAFPDSMDQKFHNMTVNECFQSRSTVLQGQPFGG) the chain is on the extracellular side. The helical transmembrane segment at 36–60 (IPTVLVLNIILWVFVVLLYSFLRKA) threads the bilayer. At 61–124 (AWDYGRLALL…RDRDLINKCG (64 aa)) the chain is on the cytoplasmic side. A phosphoserine mark is found at S75 and S78. The helical transmembrane segment at 125-157 (DDARIYITFQYHLIIFVLILCIPSLGIILPVNY) threads the bilayer. The Extracellular segment spans residues 158 to 180 (IGTVLDWNSHFGRTTIVNVSTES). Residues 181–205 (KFLWLHSLFAFLYFLINLAFMGHHC) traverse the membrane as a helical segment. At 206–401 (LGFVPKKSLH…IIWKHLSIRR (196 aa)) the chain is on the cytoplasmic side. Residues 402-431 (FSWWTRFIAINTFLFFLFFFLTTPAIIINT) form a helical membrane-spanning segment. At 432-446 (IDIYNVTRPIEKLQS) the chain is on the extracellular side. A helical membrane pass occupies residues 447–476 (PIVTQFFPSVLLWAFTVTMPLLVYLSAFLE). Residues 477 to 480 (AHWT) lie on the Cytoplasmic side of the membrane. Residues 481–517 (RSSQNLIIVHKCYIFLVFMVVILPSMGLTSLHVFLRW) traverse the membrane as a helical segment. Residues 518 to 540 (LFDIYYLEHATIRFQCVFLPDNG) lie on the Extracellular side of the membrane. A helical membrane pass occupies residues 541–573 (AFFINYVITAALLGTGMELMRLGSLCTYCTRLF). The Cytoplasmic segment spans residues 574–593 (LSKSEPERVHIRKNQATDFQ). A helical membrane pass occupies residues 594–612 (FGREYAWMLNVFSVVMAYS). At 613–615 (ITC) the chain is on the extracellular side. Residues 616 to 640 (PIIVPFGLLYLCMKHITDRYNMYYS) traverse the membrane as a helical segment. Topologically, residues 641–647 (YAPTKLN) are cytoplasmic. Residues 648–676 (AQIHMAAVYQAIFAPLLGLFWMLFFSILR) traverse the membrane as a helical segment. At 677-681 (VGSLH) the chain is on the extracellular side. The chain crosses the membrane as a helical span at residues 682 to 702 (SITLFSMSSLIISVVIAFSGV). Over 703–802 (FLGKLRIAQR…EGLEMEGQSH (100 aa)) the chain is Cytoplasmic. Positions 753–785 (TPASSPARHTYGTINSQPEEGEEESGLRGFARE) are disordered.

This sequence belongs to the CSC1 (TC 1.A.17) family. As to quaternary structure, monomer.

The protein resides in the endoplasmic reticulum membrane. The protein localises to the cell membrane. The enzyme catalyses Ca(2+)(in) = Ca(2+)(out). In terms of biological role, acts as an osmosensitive cation channel preferentially activated upon hypotonic stress. In contrast to TMEM63B, does not show phospholipid scramblase activity. Enriched in mitochondria-ER contact sites where it may regulate the metabolite flux and organelles' morphologies in response to osmotic changes. In particular may regulate mitochondrial motility and function in motor neuron axons. Required for the functional integrity of the kidney glomerular filtration barrier. The chain is Osmosensitive cation channel TMEM63C from Mus musculus (Mouse).